A 345-amino-acid chain; its full sequence is Annexin A9 (345 aa).

4 Annexin repeats span residues phenylalanine 41–glutamine 112, proline 113–lysine 184, asparagine 197–serine 266, and asparagine 270–arginine 341.

This sequence belongs to the annexin family. In terms of assembly, homodimer.

Functionally, may act as a low affinity receptor for acetylcholine. The sequence is that of Annexin A9 (ANXA9) from Bos taurus (Bovine).